The following is a 473-amino-acid chain: UTP--glucose-1-phosphate uridylyltransferase (473 aa).

UTP is bound by residues 89 to 92, lysine 103, glutamine 166, and glycine 195; that span reads LNGG. Residue 91 to 92 participates in substrate binding; the sequence is GG. Substrate-binding positions include histidine 196 and 224-226; that span reads NSD. UTP is bound by residues aspartate 226 and lysine 364.

Belongs to the UDPGP type 1 family.

Its subcellular location is the cytoplasm. The enzyme catalyses alpha-D-glucose 1-phosphate + UTP + H(+) = UDP-alpha-D-glucose + diphosphate. Its function is as follows. Plays a central role as a glucosyl donor in cellular metabolic pathways. The polypeptide is UTP--glucose-1-phosphate uridylyltransferase (Hordeum vulgare (Barley)).